A 505-amino-acid chain; its full sequence is Putative thymidine phosphorylase (505 aa).

This sequence belongs to the thymidine/pyrimidine-nucleoside phosphorylase family. Type 2 subfamily.

It carries out the reaction thymidine + phosphate = 2-deoxy-alpha-D-ribose 1-phosphate + thymine. The protein is Putative thymidine phosphorylase of Hahella chejuensis (strain KCTC 2396).